Reading from the N-terminus, the 264-residue chain is Thymidylate synthase (264 aa).

DUMP is bound at residue Arg-21. His-51 is a binding site for (6R)-5,10-methylene-5,6,7,8-tetrahydrofolate. Position 126-127 (126-127) interacts with dUMP; the sequence is RR. The active-site Nucleophile is Cys-146. Residues 166 to 169, Asn-177, and 207 to 209 each bind dUMP; these read RSCD and HLY. Position 169 (Asp-169) interacts with (6R)-5,10-methylene-5,6,7,8-tetrahydrofolate. Position 263 (Ala-263) interacts with (6R)-5,10-methylene-5,6,7,8-tetrahydrofolate.

Belongs to the thymidylate synthase family. Bacterial-type ThyA subfamily. Homodimer.

Its subcellular location is the cytoplasm. The catalysed reaction is dUMP + (6R)-5,10-methylene-5,6,7,8-tetrahydrofolate = 7,8-dihydrofolate + dTMP. Its pathway is pyrimidine metabolism; dTTP biosynthesis. Its function is as follows. Catalyzes the reductive methylation of 2'-deoxyuridine-5'-monophosphate (dUMP) to 2'-deoxythymidine-5'-monophosphate (dTMP) while utilizing 5,10-methylenetetrahydrofolate (mTHF) as the methyl donor and reductant in the reaction, yielding dihydrofolate (DHF) as a by-product. This enzymatic reaction provides an intracellular de novo source of dTMP, an essential precursor for DNA biosynthesis. The chain is Thymidylate synthase from Yersinia pseudotuberculosis serotype O:1b (strain IP 31758).